The sequence spans 339 residues: tRNA N6-adenosine threonylcarbamoyltransferase (339 aa).

His-107 and His-111 together coordinate Fe cation. Substrate is bound by residues 129 to 133 (LVSGG), Asp-162, Gly-175, and Asn-279. Asp-307 is a Fe cation binding site.

This sequence belongs to the KAE1 / TsaD family. The cofactor is Fe(2+).

The protein localises to the cytoplasm. The enzyme catalyses L-threonylcarbamoyladenylate + adenosine(37) in tRNA = N(6)-L-threonylcarbamoyladenosine(37) in tRNA + AMP + H(+). Its function is as follows. Required for the formation of a threonylcarbamoyl group on adenosine at position 37 (t(6)A37) in tRNAs that read codons beginning with adenine. Is involved in the transfer of the threonylcarbamoyl moiety of threonylcarbamoyl-AMP (TC-AMP) to the N6 group of A37, together with TsaE and TsaB. TsaD likely plays a direct catalytic role in this reaction. This chain is tRNA N6-adenosine threonylcarbamoyltransferase, found in Campylobacter curvus (strain 525.92).